A 419-amino-acid polypeptide reads, in one-letter code: MTTVSAIGALVALIVAIFLILKKVSPAYGMLVGALVGGLIGGADLSQTVSLMIGGAQGITTAVMRILAAGVLAGVLIESGAANSITETITNKLGETRALLALALATMILTAVGVFVDVAVITVSPIALALSRRSDLSKAAILLAMIGGGKAGNIMSPNPNAIAAADTFHLPLTSVMMAGIIPALFGLILTYFLAKRLINKGSKVTDKEVIVLETQNLPSFLTALVAPLVAILLLALRPLFDIKVDPLIALPLGGLIGAFCMGKLRNINSYAINGLSKMTPVAIMLLGTGALAGIIANSGLKEVLIQGLEHSGLPSYILAPISGVLMSLATASTTAGTAVASNVFSSTLLELGVSSLAGAAMIHAGATVFDHMPHGSFFHATGGSVNMDIKERLKLIPYESAVGLMMTIVSTLIFGVFKF.

Transmembrane regions (helical) follow at residues 1 to 21 (MTTV…FLIL), 24 to 44 (VSPA…GGAD), 66 to 86 (ILAA…NSIT), 101 to 121 (ALAL…VAVI), 174 to 194 (SVMM…YFLA), 216 to 236 (NLPS…LLAL), 242 to 262 (IKVD…FCMG), 280 to 300 (PVAI…NSGL), 311 to 331 (SGLP…LATA), 349 to 369 (LELG…ATVF), and 396 to 416 (IPYE…IFGV).

It belongs to the CitM (TC 2.A.11) transporter family.

The protein localises to the cell membrane. This is an uncharacterized protein from Haemophilus influenzae (strain ATCC 51907 / DSM 11121 / KW20 / Rd).